We begin with the raw amino-acid sequence, 247 residues long: 3-deoxy-manno-octulosonate cytidylyltransferase (247 aa).

Belongs to the KdsB family.

It is found in the cytoplasm. It carries out the reaction 3-deoxy-alpha-D-manno-oct-2-ulosonate + CTP = CMP-3-deoxy-beta-D-manno-octulosonate + diphosphate. The protein operates within nucleotide-sugar biosynthesis; CMP-3-deoxy-D-manno-octulosonate biosynthesis; CMP-3-deoxy-D-manno-octulosonate from 3-deoxy-D-manno-octulosonate and CTP: step 1/1. Its pathway is bacterial outer membrane biogenesis; lipopolysaccharide biosynthesis. Activates KDO (a required 8-carbon sugar) for incorporation into bacterial lipopolysaccharide in Gram-negative bacteria. The protein is 3-deoxy-manno-octulosonate cytidylyltransferase of Chlorobium phaeovibrioides (strain DSM 265 / 1930) (Prosthecochloris vibrioformis (strain DSM 265)).